Reading from the N-terminus, the 364-residue chain is Chorismate synthase (364 aa).

Arginine 48 is an NADP(+) binding site. FMN is bound by residues 125 to 127 (RSS), 237 to 238 (NA), glycine 277, 292 to 296 (KPTSS), and arginine 318.

Belongs to the chorismate synthase family. As to quaternary structure, homotetramer. The cofactor is FMNH2.

It catalyses the reaction 5-O-(1-carboxyvinyl)-3-phosphoshikimate = chorismate + phosphate. It functions in the pathway metabolic intermediate biosynthesis; chorismate biosynthesis; chorismate from D-erythrose 4-phosphate and phosphoenolpyruvate: step 7/7. Functionally, catalyzes the anti-1,4-elimination of the C-3 phosphate and the C-6 proR hydrogen from 5-enolpyruvylshikimate-3-phosphate (EPSP) to yield chorismate, which is the branch point compound that serves as the starting substrate for the three terminal pathways of aromatic amino acid biosynthesis. This reaction introduces a second double bond into the aromatic ring system. This Albidiferax ferrireducens (strain ATCC BAA-621 / DSM 15236 / T118) (Rhodoferax ferrireducens) protein is Chorismate synthase.